A 93-amino-acid chain; its full sequence is Pyrimidine/purine nucleoside phosphorylase (93 aa).

It belongs to the nucleoside phosphorylase PpnP family.

It catalyses the reaction a purine D-ribonucleoside + phosphate = a purine nucleobase + alpha-D-ribose 1-phosphate. It carries out the reaction adenosine + phosphate = alpha-D-ribose 1-phosphate + adenine. The enzyme catalyses cytidine + phosphate = cytosine + alpha-D-ribose 1-phosphate. The catalysed reaction is guanosine + phosphate = alpha-D-ribose 1-phosphate + guanine. It catalyses the reaction inosine + phosphate = alpha-D-ribose 1-phosphate + hypoxanthine. It carries out the reaction thymidine + phosphate = 2-deoxy-alpha-D-ribose 1-phosphate + thymine. The enzyme catalyses uridine + phosphate = alpha-D-ribose 1-phosphate + uracil. The catalysed reaction is xanthosine + phosphate = alpha-D-ribose 1-phosphate + xanthine. Catalyzes the phosphorolysis of diverse nucleosides, yielding D-ribose 1-phosphate and the respective free bases. Can use uridine, adenosine, guanosine, cytidine, thymidine, inosine and xanthosine as substrates. Also catalyzes the reverse reactions. The chain is Pyrimidine/purine nucleoside phosphorylase from Hahella chejuensis (strain KCTC 2396).